Here is a 172-residue protein sequence, read N- to C-terminus: Adenylate kinase isoenzyme 6 (172 aa).

Gly-13, Gly-15, Lys-16, Thr-17, and Thr-18 together coordinate ATP. Positions 33 to 56 (NVGDLAREEQLYDGYDEEYDCPIL) are NMP. Residues 33–56 (NVGDLAREEQLYDGYDEEYDCPIL) form an NMPbind region. The tract at residues 108–118 (TRGYNEKKLTD) is LID. The ATP site is built by Arg-109 and Lys-148.

The protein belongs to the adenylate kinase family. AK6 subfamily. Monomer and homodimer. Interacts with small ribosomal subunit protein uS11. Not a structural component of 43S pre-ribosomes, but transiently interacts with them by binding to uS11. Interacts with COIL (via C-terminus). As to expression, expressed in heart, brain, placenta, lung, liver, skeletal muscle, kidney, pancreas, chorionic villi and the central nervous system.

Its subcellular location is the cytoplasm. The protein localises to the nucleus. The protein resides in the nucleoplasm. It localises to the cajal body. It carries out the reaction AMP + ATP = 2 ADP. The enzyme catalyses ATP + H2O = ADP + phosphate + H(+). Functionally, broad-specificity nucleoside monophosphate (NMP) kinase that catalyzes the reversible transfer of the terminal phosphate group between nucleoside triphosphates and monophosphates. Also has ATPase activity. Involved in the late cytoplasmic maturation steps of the 40S ribosomal particles, specifically 18S rRNA maturation. While NMP activity is not required for ribosome maturation, ATPase activity is. Associates transiently with small ribosomal subunit protein uS11. ATP hydrolysis breaks the interaction with uS11. May temporarily remove uS11 from the ribosome to enable a conformational change of the ribosomal RNA that is needed for the final maturation step of the small ribosomal subunit. Its NMP activity may have a role in nuclear energy homeostasis. AMP and dAMP are the preferred substrates, but CMP and dCMP are also good substrates. IMP is phosphorylated to a much lesser extent. All nucleoside triphosphates ATP, GTP, UTP, CTP, dATP, dCTP, dGTP, and TTP are accepted as phosphate donors. CTP is the best phosphate donor, followed by UTP, ATP, GTP and dCTP. May be involved in regulation of Cajal body (CB) formation. This chain is Adenylate kinase isoenzyme 6, found in Homo sapiens (Human).